We begin with the raw amino-acid sequence, 174 residues long: RNA pyrophosphohydrolase (174 aa).

In terms of domain architecture, Nudix hydrolase spans 6 to 149 (GFRANVGIVI…KREVYRRAMK (144 aa)). The Nudix box motif lies at 38–59 (GGIDEGETAEQTMYRELYEEVG).

It belongs to the Nudix hydrolase family. RppH subfamily. Requires a divalent metal cation as cofactor.

In terms of biological role, accelerates the degradation of transcripts by removing pyrophosphate from the 5'-end of triphosphorylated RNA, leading to a more labile monophosphorylated state that can stimulate subsequent ribonuclease cleavage. This is RNA pyrophosphohydrolase from Pseudoalteromonas atlantica (strain T6c / ATCC BAA-1087).